The following is a 314-amino-acid chain: Acetylglutamate kinase (314 aa).

Substrate contacts are provided by residues 76–77 (GG), Arg-98, and Asn-199.

Belongs to the acetylglutamate kinase family. ArgB subfamily.

It localises to the cytoplasm. It carries out the reaction N-acetyl-L-glutamate + ATP = N-acetyl-L-glutamyl 5-phosphate + ADP. Its pathway is amino-acid biosynthesis; L-arginine biosynthesis; N(2)-acetyl-L-ornithine from L-glutamate: step 2/4. Catalyzes the ATP-dependent phosphorylation of N-acetyl-L-glutamate. This is Acetylglutamate kinase from Bifidobacterium longum (strain DJO10A).